The chain runs to 221 residues: Enolase-phosphatase E1 (221 aa).

It belongs to the HAD-like hydrolase superfamily. MasA/MtnC family. In terms of assembly, monomer. Mg(2+) serves as cofactor.

The enzyme catalyses 5-methylsulfanyl-2,3-dioxopentyl phosphate + H2O = 1,2-dihydroxy-5-(methylsulfanyl)pent-1-en-3-one + phosphate. It participates in amino-acid biosynthesis; L-methionine biosynthesis via salvage pathway; L-methionine from S-methyl-5-thio-alpha-D-ribose 1-phosphate: step 3/6. Its pathway is amino-acid biosynthesis; L-methionine biosynthesis via salvage pathway; L-methionine from S-methyl-5-thio-alpha-D-ribose 1-phosphate: step 4/6. Bifunctional enzyme that catalyzes the enolization of 2,3-diketo-5-methylthiopentyl-1-phosphate (DK-MTP-1-P) into the intermediate 2-hydroxy-3-keto-5-methylthiopentenyl-1-phosphate (HK-MTPenyl-1-P), which is then dephosphorylated to form the acireductone 1,2-dihydroxy-3-keto-5-methylthiopentene (DHK-MTPene). The chain is Enolase-phosphatase E1 from Hydrogenobaculum sp. (strain Y04AAS1).